We begin with the raw amino-acid sequence, 86 residues long: MVTIAAIIYEPGNSIKNKTGTWRTFRPILDNEKCVKCENCYIFCPEGAIQEDENGNFKIDYDYCKGCLICMNECPVNAITKVREEK.

2 4Fe-4S ferredoxin-type domains span residues 25-54 and 55-84; these read FRPI…EDEN and GNFK…KVRE. [4Fe-4S] cluster-binding residues include Cys-34, Cys-37, Cys-40, Cys-44, Cys-64, Cys-67, Cys-70, and Cys-74.

Heterotetramer of one alpha, one beta, one delta and one gamma chain. [4Fe-4S] cluster serves as cofactor.

This Methanocaldococcus jannaschii (strain ATCC 43067 / DSM 2661 / JAL-1 / JCM 10045 / NBRC 100440) (Methanococcus jannaschii) protein is Pyruvate synthase subunit PorD (porD).